The primary structure comprises 580 residues: Acyl-coenzyme A synthetase ACSM3, mitochondrial (580 aa).

The transit peptide at 1–21 (MVMLLRARCFQRLAIPDPMRV) directs the protein to the mitochondrion. Lys-67 and Lys-100 each carry N6-succinyllysine. Lys-151 bears the N6-acetyllysine mark. ATP contacts are provided by residues 229–237 (TSGTTGPPK), 368–373 (EGYGQT), Asp-455, Arg-470, and Lys-566.

It belongs to the ATP-dependent AMP-binding enzyme family. It depends on Mg(2+) as a cofactor. Mn(2+) serves as cofactor. As to expression, detected in kidney (at protein level). Detected in kidney proximal tubules and in liver. Detected at low levels in testis, stomach, heart and lung.

Its subcellular location is the mitochondrion. It localises to the mitochondrion matrix. The enzyme catalyses a medium-chain fatty acid + ATP + CoA = a medium-chain fatty acyl-CoA + AMP + diphosphate. It carries out the reaction propanoate + ATP + CoA = propanoyl-CoA + AMP + diphosphate. It catalyses the reaction butanoate + ATP + CoA = butanoyl-CoA + AMP + diphosphate. The catalysed reaction is 2-methylpropanoate + ATP + CoA = 2-methylpropanoyl-CoA + AMP + diphosphate. The enzyme catalyses 2-methylbutanoate + ATP + CoA = 2-methylbutanoyl-CoA + AMP + diphosphate. It carries out the reaction octanoate + ATP + CoA = octanoyl-CoA + AMP + diphosphate. Its function is as follows. Catalyzes the activation of fatty acids by CoA to produce an acyl-CoA, the first step in fatty acid metabolism. Capable of activating medium-chain fatty acids with a preference for isobutyrate among fatty acids with 2-6 carbon atoms. The polypeptide is Acyl-coenzyme A synthetase ACSM3, mitochondrial (Acsm3) (Mus musculus (Mouse)).